The sequence spans 358 residues: Peptide chain release factor 1 (358 aa).

Gln233 carries the N5-methylglutamine modification. The span at 282–306 shows a compositional bias: basic and acidic residues; that stretch reads QRAASERSADRRGQVGSGDRSERVR. The segment at 282–308 is disordered; the sequence is QRAASERSADRRGQVGSGDRSERVRTY.

It belongs to the prokaryotic/mitochondrial release factor family. In terms of processing, methylated by PrmC. Methylation increases the termination efficiency of RF1.

The protein resides in the cytoplasm. Its function is as follows. Peptide chain release factor 1 directs the termination of translation in response to the peptide chain termination codons UAG and UAA. The polypeptide is Peptide chain release factor 1 (Afipia carboxidovorans (strain ATCC 49405 / DSM 1227 / KCTC 32145 / OM5) (Oligotropha carboxidovorans)).